Here is a 442-residue protein sequence, read N- to C-terminus: Tryptophan synthase beta chain 2 (442 aa).

Lys-122 is subject to N6-(pyridoxal phosphate)lysine.

It belongs to the TrpB family. As to quaternary structure, tetramer of two alpha and two beta chains. Requires pyridoxal 5'-phosphate as cofactor.

It catalyses the reaction (1S,2R)-1-C-(indol-3-yl)glycerol 3-phosphate + L-serine = D-glyceraldehyde 3-phosphate + L-tryptophan + H2O. It functions in the pathway amino-acid biosynthesis; L-tryptophan biosynthesis; L-tryptophan from chorismate: step 5/5. Its function is as follows. The beta subunit is responsible for the synthesis of L-tryptophan from indole and L-serine. The polypeptide is Tryptophan synthase beta chain 2 (trpB2) (Methanosarcina mazei (strain ATCC BAA-159 / DSM 3647 / Goe1 / Go1 / JCM 11833 / OCM 88) (Methanosarcina frisia)).